Consider the following 213-residue polypeptide: Small ribosomal subunit protein uS5 (213 aa).

Positions L54 to V117 constitute an S5 DRBM domain.

This sequence belongs to the universal ribosomal protein uS5 family. Part of the 30S ribosomal subunit. Contacts protein S4.

With S4 and S12 plays an important role in translational accuracy. The polypeptide is Small ribosomal subunit protein uS5 (Hyperthermus butylicus (strain DSM 5456 / JCM 9403 / PLM1-5)).